An 878-amino-acid polypeptide reads, in one-letter code: Phosphoenolpyruvate carboxylase (878 aa).

Active-site residues include His-138 and Lys-545.

This sequence belongs to the PEPCase type 1 family. Mg(2+) serves as cofactor.

It carries out the reaction oxaloacetate + phosphate = phosphoenolpyruvate + hydrogencarbonate. Its function is as follows. Forms oxaloacetate, a four-carbon dicarboxylic acid source for the tricarboxylic acid cycle. This is Phosphoenolpyruvate carboxylase from Shewanella loihica (strain ATCC BAA-1088 / PV-4).